We begin with the raw amino-acid sequence, 335 residues long: DNA-directed RNA polymerase RPB7 homolog (335 aa).

The protein belongs to the Asfivirus DNA-directed RNA polymerase RPB7 homolog family. In terms of assembly, part of the viral DNA-directed RNA polymerase that consists of 8 polII-like subunits (RPB1, RPB2, RPB3, RPB5, RPB6, RPB7, RPB9, RPB10), a capping enzyme and a termination factor.

The protein localises to the host cytoplasm. Its subcellular location is the virion. Its function is as follows. Component of the DNA-directed RNA polymerase (RNAP) that catalyzes the transcription in the cytoplasm of viral DNA into RNA using the four ribonucleoside triphosphates as substrates. The protein is DNA-directed RNA polymerase RPB7 homolog of African swine fever virus (isolate Pig/Kenya/KEN-50/1950) (ASFV).